Consider the following 1601-residue polypeptide: Rap guanine nucleotide exchange factor 6 (1601 aa).

Residue M1 is modified to N-acetylmethionine. 2 disordered regions span residues 1-22 (MNSPVDPGARQALRKKPPERTP) and 179-250 (PHPQ…QGRD). At S3 the chain carries Phosphoserine. Over residues 187–205 (SSSQSGCSIASDSGSSSLS) the composition is skewed to low complexity. The segment covering 228–241 (VDSEDDEEEDEEID) has biased composition (acidic residues). Residue 280–399 (AFANMTMSVR…VEEEGEIVMV (120 aa)) participates in a nucleoside 3',5'-cyclic phosphate binding. One can recognise an N-terminal Ras-GEF domain in the interval 412 to 526 (KGHIVIKATP…LLNIACAAKA (115 aa)). The PDZ domain occupies 530-615 (QVVLQKASRE…LTVKTNIFVF (86 aa)). One can recognise a Ras-associating domain in the interval 749–835 (PDQVIRVFKV…GRYYLKNNME (87 aa)). Residues 860–1088 (STIEVATQLS…LDVQGGAHKK (229 aa)) form the Ras-GEF domain. Disordered stretches follow at residues 1192–1274 (IRKK…SRSS), 1302–1324 (ESTGALEKTEHASGIGDHSQHGP), 1455–1478 (LESTPAESSEGLDPKDATDPVYKT), and 1571–1601 (QRHNLQPFHPKLGDVTDADSEADENEQVSAV). Low complexity-rich tracts occupy residues 1229–1238 (SVASSLHSSP) and 1255–1274 (SAKSDNLSDSSHSEISSRSS). Residues 1586–1601 (TDADSEADENEQVSAV) show a composition bias toward acidic residues.

Interacts with the second PDZ domain of human PTP1e. In terms of tissue distribution, isoform 3 has highest expression levels in the brain, heart, liver, lung and placenta and is barely detectable in skeletal muscle, kidney and pancreas.

The protein resides in the cytoplasm. The protein localises to the cell membrane. In terms of biological role, guanine nucleotide exchange factor (GEF) for Rap1A, Rap2A and M-Ras GTPases. Does not interact with cAMP. The sequence is that of Rap guanine nucleotide exchange factor 6 (RAPGEF6) from Homo sapiens (Human).